Here is a 438-residue protein sequence, read N- to C-terminus: MNGELSFKYDNVMEENLGNLGISNGKLESFNNESSKIIEILKEKELNGEFGFLDVLNDNLDKYYELNEYSKNFENILIIGIGGSNLGLRAAETGILGSFTSRYEIPRIYYMDNSDPEKTHDILSNIDLEKTLVFVISKSGNTVETLANFFIVRNLMKKKNIDLEKHVVSITSGGELEKITKKENYIHFEVPENVGGRFSVLSSVGIAPLSCTSVDIKKLIDGAKSIEKSCKCEDIFKNPALMNAVIHKLMYNRGKTVSVMMPYIERLRSFGMWYGQLWAESLGKNGFGQTPVIAVGATSQHSQLQLYMDGPNDKIATFLKVNKYRNDLKIEYEYDHHLSGHNLSEVITSELVGTENSMKHNNIPNVKITLSKLNEITMGKLFLMYEMQTAISGELYGINAFDQPAVEYGKKIAHECLTGSKVDSENKYINGKYIITSK.

Glu280 (proton donor) is an active-site residue. Catalysis depends on residues His301 and Lys410.

The protein belongs to the GPI family.

It localises to the cytoplasm. It catalyses the reaction alpha-D-glucose 6-phosphate = beta-D-fructose 6-phosphate. It functions in the pathway carbohydrate biosynthesis; gluconeogenesis. It participates in carbohydrate degradation; glycolysis; D-glyceraldehyde 3-phosphate and glycerone phosphate from D-glucose: step 2/4. Functionally, catalyzes the reversible isomerization of glucose-6-phosphate to fructose-6-phosphate. This is Probable glucose-6-phosphate isomerase from Methanococcus maripaludis (strain DSM 14266 / JCM 13030 / NBRC 101832 / S2 / LL).